Consider the following 238-residue polypeptide: uncharacterized protein (238 aa).

7 helical membrane-spanning segments follow: residues 15 to 37 (FGALHFAIASVAVLLSALFVLLP), 50 to 69 (ARAGVAILFLRLGLMLCGTL), 79 to 96 (LPFHLCPAALISGSLYFI), 101 to 118 (IFFNLLYFWHFGSFVAVL), 128 to 150 (ILYAYLFMLTHCLEPAMVVFSLL), 163 to 183 (CAVLGFLLLAANALFWNRRLG), and 203 to 225 (FFVYQLLFVSALCLLMLVLYLPF).

Its subcellular location is the cell membrane. This is an uncharacterized protein from Treponema pallidum (strain Nichols).